The chain runs to 127 residues: Holo-[acyl-carrier-protein] synthase (127 aa).

Mg(2+)-binding residues include Asp9 and Glu58.

The protein belongs to the P-Pant transferase superfamily. AcpS family. Mg(2+) serves as cofactor.

The protein localises to the cytoplasm. It catalyses the reaction apo-[ACP] + CoA = holo-[ACP] + adenosine 3',5'-bisphosphate + H(+). In terms of biological role, transfers the 4'-phosphopantetheine moiety from coenzyme A to a Ser of acyl-carrier-protein. The protein is Holo-[acyl-carrier-protein] synthase of Shewanella sp. (strain ANA-3).